We begin with the raw amino-acid sequence, 770 residues long: Probable methyltransferase PMT24 (770 aa).

Topologically, residues 1-17 are cytoplasmic; the sequence is MAMGKYSRVDGKKSSGY. A helical; Signal-anchor for type II membrane protein transmembrane segment spans residues 18–38; that stretch reads GLTITIVLIVSLCLVGAWMFM. The Lumenal portion of the chain corresponds to 39-770; that stretch reads SSWSAPTESI…EAETIQSAIA (732 aa). Basic and acidic residues-rich tracts occupy residues 54 to 81 and 93 to 164; these read ERTK…FPDE and NEEK…KSED. A disordered region spans residues 54-223; the sequence is ERTKDVDTTK…STGSGAWSTQ (170 aa). Asparagine 160 and asparagine 166 each carry an N-linked (GlcNAc...) asparagine glycan. A compositionally biased stretch (polar residues) spans 212–223; it reads ESSTGSGAWSTQ. N-linked (GlcNAc...) asparagine glycosylation is found at asparagine 244 and asparagine 363.

It belongs to the methyltransferase superfamily.

It localises to the golgi apparatus membrane. In Arabidopsis thaliana (Mouse-ear cress), this protein is Probable methyltransferase PMT24.